The chain runs to 353 residues: Uroporphyrinogen decarboxylase (353 aa).

Substrate contacts are provided by residues 29–33 (RQAGR), phenylalanine 48, aspartate 78, tyrosine 154, serine 209, and histidine 322.

The protein belongs to the uroporphyrinogen decarboxylase family. In terms of assembly, homodimer.

It is found in the cytoplasm. It carries out the reaction uroporphyrinogen III + 4 H(+) = coproporphyrinogen III + 4 CO2. It functions in the pathway porphyrin-containing compound metabolism; protoporphyrin-IX biosynthesis; coproporphyrinogen-III from 5-aminolevulinate: step 4/4. Catalyzes the decarboxylation of four acetate groups of uroporphyrinogen-III to yield coproporphyrinogen-III. The polypeptide is Uroporphyrinogen decarboxylase (hemE) (Bacillus subtilis (strain 168)).